The following is a 544-amino-acid chain: Methionine--tRNA ligase 2 (544 aa).

The 'HIGH' region motif lies at 10–20; that stretch reads PYANGSLHLGH. Zn(2+)-binding residues include Cys-141, Cys-144, Cys-153, and Cys-156. A 'KMSKS' region motif is present at residues 329-333; the sequence is KLSTS. Thr-332 is an ATP binding site.

Belongs to the class-I aminoacyl-tRNA synthetase family. MetG type 1 subfamily. As to quaternary structure, monomer. Requires Zn(2+) as cofactor.

The protein resides in the cytoplasm. The catalysed reaction is tRNA(Met) + L-methionine + ATP = L-methionyl-tRNA(Met) + AMP + diphosphate. In terms of biological role, is required not only for elongation of protein synthesis but also for the initiation of all mRNA translation through initiator tRNA(fMet) aminoacylation. This Bacillus anthracis protein is Methionine--tRNA ligase 2.